Reading from the N-terminus, the 22-residue chain is Myofibril-bound serine protease (22 aa).

In terms of domain architecture, Peptidase S1 spans 1–22 (IVGGYECEAYSKPYQVSINLGY).

Belongs to the peptidase S1 family. Detected in skeletal muscle (at protein level).

It localises to the cytoplasm. Its function is as follows. Serine protease which degrades the myosin heavy chain and tropomyosin, but not actin. Selectively cleaves Arg-|-Xaa bonds. This chain is Myofibril-bound serine protease, found in Saurida undosquamis (Brushtooth lizardfish).